A 336-amino-acid polypeptide reads, in one-letter code: Putative bifunctional cytochrome c-type biogenesis protein CcmAE (336 aa).

Positions 1–199 (MLEARDLYCE…ADTVRRLALT (199 aa)) are cytochrome c biogenesis ATP-binding export protein CcmA 2. The ABC transporter domain occupies 2–242 (LEARDLYCER…VGQRLRVGGM (241 aa)). 34–41 (GGNGAGKT) is a binding site for ATP. Positions 196-336 (LALTTALVLY…PQRVDKDTSS (141 aa)) are cytochrome c-type biogenesis protein CcmE 2. Positions 307 and 311 each coordinate heme. The interval 307–336 (HDENYTPPEVEKAMQENHRRPQRVDKDTSS) is disordered.

It in the N-terminal section; belongs to the ABC transporter superfamily. CcmA exporter (TC 3.A.1.107) family. In the C-terminal section; belongs to the CcmE/CycJ family.

The protein localises to the cell inner membrane. It catalyses the reaction heme b(in) + ATP + H2O = heme b(out) + ADP + phosphate + H(+). Functionally, part of the ABC transporter complex CcmAB involved in the biogenesis of c-type cytochromes; once thought to export heme, this seems not to be the case, but its exact role is uncertain. Responsible for energy coupling to the transport system. Heme chaperone required for the biogenesis of c-type cytochromes. Transiently binds heme delivered by CcmC and transfers the heme to apo-cytochromes in a process facilitated by CcmF and CcmH. The chain is Putative bifunctional cytochrome c-type biogenesis protein CcmAE (ccmAE) from Salmonella choleraesuis (strain SC-B67).